A 171-amino-acid chain; its full sequence is Squamosa promoter-binding protein 2 (171 aa).

Disordered stretches follow at residues 20–46 (GDEG…VVKV) and 57–76 (KLNL…TASG). The span at 22–40 (EGSDFEEEEEGEDEEEEEQ) shows a compositional bias: acidic residues. An SBP-type zinc finger spans residues 82–159 (QPCCLVENCG…AGHNERRRKS (78 aa)). 8 residues coordinate Zn(2+): Cys-85, Cys-90, Cys-107, His-110, Cys-126, Cys-129, His-133, and Cys-145. Positions 142–158 (KRSCRRRLAGHNERRRK) match the Bipartite nuclear localization signal motif. Over residues 149–158 (LAGHNERRRK) the composition is skewed to basic residues. The disordered stretch occupies residues 149 to 171 (LAGHNERRRKSSLESHKEGRSPR). The segment covering 159–171 (SSLESHKEGRSPR) has biased composition (basic and acidic residues).

Its subcellular location is the nucleus. In terms of biological role, probable transcriptional factor. Binds to the promoter of the SQUAMOSA gene. In Antirrhinum majus (Garden snapdragon), this protein is Squamosa promoter-binding protein 2 (SBP2).